The following is a 209-amino-acid chain: GTP-binding nuclear protein Ran1B (209 aa).

Residues 1–162 (NFKLVIVGDG…LYLARKLAGD (162 aa)) form the Small GTPase Ran-type domain. Position 9-16 (9-16 (DGGTGKTT)) interacts with GTP. The tract at residues 28 to 36 (KKYEPTIGV) is switch-I. Residues glycine 59, 113 to 116 (NKVD), and 141 to 143 (SAK) contribute to the GTP site. The interval 59–75 (GQEKFGGLRDGYYIHGQ) is switch-II. A compositionally biased stretch (low complexity) spans 187–200 (QHEAELAAAASQPL). Residues 187–209 (QHEAELAAAASQPLPDDDDDAFD) are disordered.

Belongs to the small GTPase superfamily. Ran family. As to quaternary structure, found in a nuclear export complex with RanGTP, exportin and pre-miRNA.

The protein resides in the nucleus. In terms of biological role, GTP-binding protein involved in nucleocytoplasmic transport. Required for the import of protein into the nucleus and also for RNA export. Involved in chromatin condensation and control of cell cycle. This Lotus japonicus (Lotus corniculatus var. japonicus) protein is GTP-binding nuclear protein Ran1B (RAN1B).